The sequence spans 544 residues: Probable protein kinase UbiB (544 aa).

In terms of domain architecture, Protein kinase spans 123–504 (DFDENALASA…QRWQKKMFVL (382 aa)). Residues 129-137 (LASASIAQV) and lysine 155 each bind ATP. Residue aspartate 290 is the Proton acceptor of the active site. A run of 2 helical transmembrane segments spans residues 501-521 (MFVL…FAAL) and 523-543 (LAIS…GFLL).

The protein belongs to the ABC1 family. UbiB subfamily.

Its subcellular location is the cell inner membrane. Its pathway is cofactor biosynthesis; ubiquinone biosynthesis [regulation]. In terms of biological role, is probably a protein kinase regulator of UbiI activity which is involved in aerobic coenzyme Q (ubiquinone) biosynthesis. This chain is Probable protein kinase UbiB, found in Histophilus somni (strain 129Pt) (Haemophilus somnus).